The primary structure comprises 148 residues: Large ribosomal subunit protein bL9 (148 aa).

Belongs to the bacterial ribosomal protein bL9 family.

Functionally, binds to the 23S rRNA. In Marinobacter nauticus (strain ATCC 700491 / DSM 11845 / VT8) (Marinobacter aquaeolei), this protein is Large ribosomal subunit protein bL9.